The sequence spans 118 residues: Small ribosomal subunit protein uS13 (118 aa).

The disordered stretch occupies residues 94–118 (GLPLRGQRTKTNARTRKGPRKPIKK).

This sequence belongs to the universal ribosomal protein uS13 family. Part of the 30S ribosomal subunit. Forms a loose heterodimer with protein S19. Forms two bridges to the 50S subunit in the 70S ribosome.

Its function is as follows. Located at the top of the head of the 30S subunit, it contacts several helices of the 16S rRNA. In the 70S ribosome it contacts the 23S rRNA (bridge B1a) and protein L5 of the 50S subunit (bridge B1b), connecting the 2 subunits; these bridges are implicated in subunit movement. Contacts the tRNAs in the A and P-sites. This chain is Small ribosomal subunit protein uS13, found in Cellvibrio japonicus (strain Ueda107) (Pseudomonas fluorescens subsp. cellulosa).